The following is a 383-amino-acid chain: Putative F-box protein At3g22650 (383 aa).

Residues 3–50 enclose the F-box domain; sequence SCERSLLPIDIIEEICCRIPVEYLTQFKLTCKQWFALLKDKRFIYKYL.

The chain is Putative F-box protein At3g22650 from Arabidopsis thaliana (Mouse-ear cress).